Consider the following 2581-residue polypeptide: Highly reducing polyketide synthase sorA (2581 aa).

Residues 14–436 form the Ketosynthase family 3 (KS3) domain; sequence SEPIAIIGMS…GSNAHIILED (423 aa). Catalysis depends on for beta-ketoacyl synthase activity residues Cys187, His322, and His359. The malonyl-CoA:ACP transacylase (MAT) domain stretch occupies residues 574–868; the sequence is VFTGQGAQWN…VVEVGPHTAL (295 aa). Residues 966 to 1103 are N-terminal hotdog fold; the sequence is HDLLGSIVEG…GLVSVELGES (138 aa). The interval 966-1270 is dehydratase (DH) domain; sequence HDLLGSIVEG…GFSYQSLGRS (305 aa). One can recognise a PKS/mFAS DH domain in the interval 966–1273; sequence HDLLGSIVEG…YQSLGRSTSL (308 aa). The active-site Proton acceptor; for dehydratase activity is His998. Positions 1119–1273 are C-terminal hotdog fold; the sequence is TRRILPADLF…YQSLGRSTSL (155 aa). Asp1184 acts as the Proton donor; for dehydratase activity in catalysis. A methyltransferase (CMet) domain region spans residues 1461-1568; it reads LEVGAATGAI…SSLLKPGGTL (108 aa). The enoyl reductase (ER)domain stretch occupies residues 1873–2184; it reads LKPDLLVFGD…AGDQIGKVVL (312 aa). The tract at residues 2207–2389 is ketoreductase (KR) domain; sequence VSYLIVGGSG…AVSIDLSVVN (183 aa). A Carrier domain is found at 2497–2574; sequence DAVRVVGTAI…QLAIDVVDRS (78 aa). Ser2534 carries the post-translational modification O-(pantetheine 4'-phosphoryl)serine.

It functions in the pathway secondary metabolite biosynthesis. Its function is as follows. Highly reducing polyketide synthase; part of the gene cluster that mediates the biosynthesis of sorbicillinoids, a diverse group of yellow secondary metabolites that restrict growth of competing pathogenic fungi but not of bacteria. Sorbicillinoids biosynthesis requires the action of two PKSs. SorA iteratively combines three acetyl units and the growing chain is modified by the ketoacyl reductase subunit, and optional by the enoyl reductase subunit in the second cycle. The polyketide is then handed over to the PKS SorB, which adds three more acetyl units, and two methyl groups. SorB releases an aldehyde, which undergoes spontaneous cyclization resulting in the formation of sorbicillin or 2',3'-dihydrosorbicillin. The monooxygenase sorC oxidizes sorbicillin and 2',3'-dihydrosorbicillin to 2',3'-dihydrosorbicillinol and sorbicillinol, respectively. The oxidoreductase sorD further converts sorbicillinol into oxosorbicillinol. Sorbicillinol is the building block for the other sorbicillinoids such as disorbicillinol, bisvertinolon, and dihydrobisvertinolone. This Penicillium rubens (strain ATCC 28089 / DSM 1075 / NRRL 1951 / Wisconsin 54-1255) (Penicillium chrysogenum) protein is Highly reducing polyketide synthase sorA.